The sequence spans 62 residues: UPF0434 protein ASA_1553 (62 aa).

Belongs to the UPF0434 family.

This is UPF0434 protein ASA_1553 from Aeromonas salmonicida (strain A449).